Here is a 349-residue protein sequence, read N- to C-terminus: Flavonol synthase/flavanone 3-hydroxylase (349 aa).

A Fe2OG dioxygenase domain is found at 213 to 310; that stretch reads DIVYMLKINY…RMSWPVFLEP (98 aa). Fe cation is bound by residues His238, Asp240, and His291.

The protein belongs to the iron/ascorbate-dependent oxidoreductase family. It depends on Fe cation as a cofactor. Requires L-ascorbate as cofactor.

It localises to the cytoplasm. The enzyme catalyses a (2R,3R)-dihydroflavonol + 2-oxoglutarate + O2 = a flavonol + succinate + CO2 + H2O. The catalysed reaction is a (2S)-flavan-4-one + 2-oxoglutarate + O2 = a (2R,3R)-dihydroflavonol + succinate + CO2. Its pathway is secondary metabolite biosynthesis; flavonoid biosynthesis. In terms of biological role, catalyzes the formation of flavonols from dihydroflavonols. It can act on dihydrokaempferol to produce kaempferol, on dihydroquercetin to produce quercitin and on dihydromyricetin to produce myricetin. This Solanum tuberosum (Potato) protein is Flavonol synthase/flavanone 3-hydroxylase.